Reading from the N-terminus, the 130-residue chain is Small ribosomal subunit protein uS8 (130 aa).

This sequence belongs to the universal ribosomal protein uS8 family.

It localises to the cytoplasm. The chain is Small ribosomal subunit protein uS8 (RPS15A) from Daucus carota (Wild carrot).